Here is an 827-residue protein sequence, read N- to C-terminus: Protein arginine N-methyltransferase 9 (827 aa).

2 TPR repeats span residues 54-87 and 88-121; these read QYSL…FPID and DVIC…NPSS. SAM-dependent MTase PRMT-type domains are found at residues 124 to 453 and 511 to 827; these read AKEN…YLRL and NAVY…RPLQ.

Belongs to the class I-like SAM-binding methyltransferase superfamily. Protein arginine N-methyltransferase family.

The protein localises to the cytoplasm. It carries out the reaction L-arginyl-[protein] + 2 S-adenosyl-L-methionine = N(omega),N(omega)'-dimethyl-L-arginyl-[protein] + 2 S-adenosyl-L-homocysteine + 2 H(+). In terms of biological role, arginine methyltransferase that can both catalyze the formation of omega-N monomethylarginine (MMA) and symmetrical dimethylarginine (sDMA). This is Protein arginine N-methyltransferase 9 (prmt9) from Xenopus laevis (African clawed frog).